We begin with the raw amino-acid sequence, 697 residues long: Potassium-transporting ATPase ATP-binding subunit (697 aa).

Transmembrane regions (helical) follow at residues 55–75 (PIMF…FLPS), 79–99 (SIPG…VLFA), 245–265 (LTLI…YLGF), and 271–291 (VLVA…LSAI). Catalysis depends on aspartate 324, which acts as the 4-aspartylphosphate intermediate. Residues aspartate 361, glutamate 365, 393 to 400 (FKAETRMS), and lysine 412 contribute to the ATP site. Positions 535 and 539 each coordinate Mg(2+). Transmembrane regions (helical) follow at residues 605–625 (FAII…LNIM), 633–653 (AILS…PLAM), and 677–697 (GGVI…GLFI).

This sequence belongs to the cation transport ATPase (P-type) (TC 3.A.3) family. Type IA subfamily. In terms of assembly, the system is composed of three essential subunits: KdpA, KdpB and KdpC.

Its subcellular location is the cell membrane. The enzyme catalyses K(+)(out) + ATP + H2O = K(+)(in) + ADP + phosphate + H(+). In terms of biological role, part of the high-affinity ATP-driven potassium transport (or Kdp) system, which catalyzes the hydrolysis of ATP coupled with the electrogenic transport of potassium into the cytoplasm. This subunit is responsible for energy coupling to the transport system and for the release of the potassium ions to the cytoplasm. The protein is Potassium-transporting ATPase ATP-binding subunit of Bacillus cereus (strain ZK / E33L).